We begin with the raw amino-acid sequence, 473 residues long: Photosystem II CP43 reaction center protein (473 aa).

A propeptide spanning residues 1–14 (MKTLYSLRRFYHVE) is cleaved from the precursor. Position 15 is an N-acetylthreonine (Thr-15). Residue Thr-15 is modified to Phosphothreonine. 5 helical membrane passes run 69-93 (LFEV…PHLA), 134-155 (LLGP…KDRN), 178-200 (KALY…RKIT), 255-275 (KPFA…LSYS), and 291-312 (WFNN…ASQA). Glu-367 serves as a coordination point for [CaMn4O5] cluster. The chain crosses the membrane as a helical span at residues 447–471 (RARAAAAGFEKGIDRDFEPVLSMTP).

It belongs to the PsbB/PsbC family. PsbC subfamily. As to quaternary structure, PSII is composed of 1 copy each of membrane proteins PsbA, PsbB, PsbC, PsbD, PsbE, PsbF, PsbH, PsbI, PsbJ, PsbK, PsbL, PsbM, PsbT, PsbX, PsbY, PsbZ, Psb30/Ycf12, at least 3 peripheral proteins of the oxygen-evolving complex and a large number of cofactors. It forms dimeric complexes. Binds multiple chlorophylls and provides some of the ligands for the Ca-4Mn-5O cluster of the oxygen-evolving complex. It may also provide a ligand for a Cl- that is required for oxygen evolution. PSII binds additional chlorophylls, carotenoids and specific lipids. serves as cofactor.

The protein localises to the plastid. The protein resides in the chloroplast thylakoid membrane. In terms of biological role, one of the components of the core complex of photosystem II (PSII). It binds chlorophyll and helps catalyze the primary light-induced photochemical processes of PSII. PSII is a light-driven water:plastoquinone oxidoreductase, using light energy to abstract electrons from H(2)O, generating O(2) and a proton gradient subsequently used for ATP formation. This chain is Photosystem II CP43 reaction center protein, found in Atropa belladonna (Belladonna).